The chain runs to 597 residues: Elongation factor 4 (597 aa).

Residues 2 to 184 form the tr-type G domain; sequence DHIRNFSIIA…ALVAKVPPPK (183 aa). GTP is bound by residues 14–19 and 131–134; these read DHGKST and NKID.

Belongs to the TRAFAC class translation factor GTPase superfamily. Classic translation factor GTPase family. LepA subfamily.

The protein resides in the cell inner membrane. The enzyme catalyses GTP + H2O = GDP + phosphate + H(+). Its function is as follows. Required for accurate and efficient protein synthesis under certain stress conditions. May act as a fidelity factor of the translation reaction, by catalyzing a one-codon backward translocation of tRNAs on improperly translocated ribosomes. Back-translocation proceeds from a post-translocation (POST) complex to a pre-translocation (PRE) complex, thus giving elongation factor G a second chance to translocate the tRNAs correctly. Binds to ribosomes in a GTP-dependent manner. The sequence is that of Elongation factor 4 from Paraburkholderia phytofirmans (strain DSM 17436 / LMG 22146 / PsJN) (Burkholderia phytofirmans).